The chain runs to 265 residues: Eukaryotic translation initiation factor 3 subunit J (265 aa).

A compositionally biased stretch (acidic residues) spans 24-34 (AGDEPILDSWD). Residues 24-74 (AGDEPILDSWDEEPKAKKEAAKPKPKPKAGGKKNAKGEEKKEQVLAIDELD) are disordered. Positions 35 to 45 (EEPKAKKEAAK) are enriched in basic and acidic residues. Residues 46 to 57 (PKPKPKAGGKKN) are compositionally biased toward basic residues. Coiled coils occupy residues 78–106 (RKEL…MAEE) and 190–220 (IENI…ARVK).

It belongs to the eIF-3 subunit J family. As to quaternary structure, component of the eukaryotic translation initiation factor 3 (eIF-3) complex.

Its subcellular location is the cytoplasm. Functionally, component of the eukaryotic translation initiation factor 3 (eIF-3) complex, which is involved in protein synthesis of a specialized repertoire of mRNAs and, together with other initiation factors, stimulates binding of mRNA and methionyl-tRNAi to the 40S ribosome. The eIF-3 complex specifically targets and initiates translation of a subset of mRNAs involved in cell proliferation. The protein is Eukaryotic translation initiation factor 3 subunit J of Candida glabrata (strain ATCC 2001 / BCRC 20586 / JCM 3761 / NBRC 0622 / NRRL Y-65 / CBS 138) (Yeast).